Consider the following 600-residue polypeptide: UvrABC system protein C (600 aa).

The 78-residue stretch at 15–92 folds into the GIY-YIG domain; sequence DKPGCYLMKD…IKKYQPYYNV (78 aa). The UVR domain maps to 197–232; sequence AQVKQDLTEKMTQASMDLEFERAAEIRDQLKYIEQT.

This sequence belongs to the UvrC family. As to quaternary structure, interacts with UvrB in an incision complex.

Its subcellular location is the cytoplasm. The UvrABC repair system catalyzes the recognition and processing of DNA lesions. UvrC both incises the 5' and 3' sides of the lesion. The N-terminal half is responsible for the 3' incision and the C-terminal half is responsible for the 5' incision. This chain is UvrABC system protein C, found in Lactobacillus johnsonii (strain CNCM I-12250 / La1 / NCC 533).